A 293-amino-acid polypeptide reads, in one-letter code: Iron-sulfur cluster transfer protein Nubpl (293 aa).

A CXXC motif probably involved in coordinating iron-sulfur cluster binding region spans residues 214 to 217 (CQNC).

It belongs to the Mrp/NBP35 ATP-binding proteins family. Homodimer; dimerization is not reliant on iron-sulfur cluster binding. The cofactor is [4Fe-4S] cluster.

The protein resides in the mitochondrion membrane. Iron-sulfur cluster transfer protein involved in the assembly of the mitochondrial membrane respiratory chain NADH dehydrogenase (Complex I). May deliver one or more Fe-S clusters to complex I subunits. Alleviates pausing in mitochondrial DNA (mtDNA) replication at slow zone 2. May be involved in mtDNA-helicase-mediated mtDNA unwinding and replication by transferring iron-sulfur clusters. In Drosophila melanogaster (Fruit fly), this protein is Iron-sulfur cluster transfer protein Nubpl.